The following is an 81-amino-acid chain: Small ribosomal subunit protein bS16 (81 aa).

It belongs to the bacterial ribosomal protein bS16 family.

In Lachnoclostridium phytofermentans (strain ATCC 700394 / DSM 18823 / ISDg) (Clostridium phytofermentans), this protein is Small ribosomal subunit protein bS16.